The sequence spans 185 residues: Elongation factor P (185 aa).

It belongs to the elongation factor P family.

Its subcellular location is the cytoplasm. The protein operates within protein biosynthesis; polypeptide chain elongation. In terms of biological role, involved in peptide bond synthesis. Stimulates efficient translation and peptide-bond synthesis on native or reconstituted 70S ribosomes in vitro. Probably functions indirectly by altering the affinity of the ribosome for aminoacyl-tRNA, thus increasing their reactivity as acceptors for peptidyl transferase. This chain is Elongation factor P, found in Bordetella avium (strain 197N).